We begin with the raw amino-acid sequence, 176 residues long: Cystatin-related protein 2 (176 aa).

The N-terminal stretch at 1–26 (MYKTLCGTQLLLAIFVLFLNFSHATA) is a signal peptide. Residues 27 to 30 (KGTR) constitute a propeptide that is removed on maturation. Asn71 carries an N-linked (GlcNAc...) asparagine glycan. Intrachain disulfides connect Cys129–Cys139 and Cys153–Cys173.

The protein belongs to the cystatin family. Prostate.

The protein is Cystatin-related protein 2 (Crp2) of Rattus norvegicus (Rat).